A 355-amino-acid polypeptide reads, in one-letter code: Protein-glutamate methylesterase/protein-glutamine glutaminase 3 (355 aa).

One can recognise a Response regulatory domain in the interval 8 to 123 (SVLIVDDSGM…AREVEDFVDK (116 aa)). Position 59 is a 4-aspartylphosphate (D59). The interval 139–161 (RSAPAAGPTPVPQAPPPPAAPPA) is disordered. Residues 145 to 159 (GPTPVPQAPPPPAAP) show a composition bias toward pro residues. A CheB-type methylesterase domain is found at 160-350 (PAGDGGIIAI…ASLLEITGAS (191 aa)). Catalysis depends on residues S172, H199, and D292.

This sequence belongs to the CheB family. Phosphorylated by CheA. Phosphorylation of the N-terminal regulatory domain activates the methylesterase activity.

The protein resides in the cytoplasm. The catalysed reaction is [protein]-L-glutamate 5-O-methyl ester + H2O = L-glutamyl-[protein] + methanol + H(+). It carries out the reaction L-glutaminyl-[protein] + H2O = L-glutamyl-[protein] + NH4(+). Functionally, involved in chemotaxis. Part of a chemotaxis signal transduction system that modulates chemotaxis in response to various stimuli. Catalyzes the demethylation of specific methylglutamate residues introduced into the chemoreceptors (methyl-accepting chemotaxis proteins or MCP) by CheR. Also mediates the irreversible deamidation of specific glutamine residues to glutamic acid. The chain is Protein-glutamate methylesterase/protein-glutamine glutaminase 3 from Paramagnetospirillum magneticum (strain ATCC 700264 / AMB-1) (Magnetospirillum magneticum).